Consider the following 534-residue polypeptide: ATP synthase subunit alpha 2 (534 aa).

175 to 182 (GDRQTGKT) provides a ligand contact to ATP. The interval 506 to 534 (FQPAPEPETAPKTKTDIKPKPKAAGGESS) is disordered. Residues 514 to 524 (TAPKTKTDIKP) are compositionally biased toward basic and acidic residues.

The protein belongs to the ATPase alpha/beta chains family. As to quaternary structure, F-type ATPases have 2 components, CF(1) - the catalytic core - and CF(0) - the membrane proton channel. CF(1) has five subunits: alpha(3), beta(3), gamma(1), delta(1), epsilon(1). CF(0) has three main subunits: a(1), b(2) and c(9-12). The alpha and beta chains form an alternating ring which encloses part of the gamma chain. CF(1) is attached to CF(0) by a central stalk formed by the gamma and epsilon chains, while a peripheral stalk is formed by the delta and b chains.

It localises to the cell inner membrane. It catalyses the reaction ATP + H2O + 4 H(+)(in) = ADP + phosphate + 5 H(+)(out). Functionally, produces ATP from ADP in the presence of a proton gradient across the membrane. The alpha chain is a regulatory subunit. This chain is ATP synthase subunit alpha 2, found in Albidiferax ferrireducens (strain ATCC BAA-621 / DSM 15236 / T118) (Rhodoferax ferrireducens).